The sequence spans 2611 residues: Highly reducing polyketide synthase ATEG_07659 (2611 aa).

The 400-residue stretch at 10-409 (SEPIAIIGLS…GTNSHVIVEG (400 aa)) folds into the Ketosynthase family 3 (KS3) domain. Catalysis depends on for beta-ketoacyl synthase activity residues C157, H292, and H330. Positions 537-844 (MVFTGQGAQW…VRFVEAFTDM (308 aa)) are malonyl-CoA:ACP transacylase (MAT) domain. The segment at 969-1109 (HDLLGVLVPG…GLITVQMAAD (141 aa)) is N-terminal hotdog fold. Residues 969–1292 (HDLLGVLVPG…CQSLGRSAPG (324 aa)) enclose the PKS/mFAS DH domain. The interval 970-1289 (DLLGVLVPGT…GLVCQSLGRS (320 aa)) is dehydratase (DH) domain. H1001 functions as the Proton acceptor; for dehydratase activity in the catalytic mechanism. The tract at residues 1128–1292 (GYTRRIDPQD…CQSLGRSAPG (165 aa)) is C-terminal hotdog fold. The active-site Proton donor; for dehydratase activity is the D1199. Residues 1469–1602 (FGQLKSLLAA…GATLLLMETT (134 aa)) are methyltransferase (CMet) domain. The enoyl reductase (ER) domain stretch occupies residues 1898 to 2213 (GLLDTLAFGD…TGKHLGKLVL (316 aa)). The ketoreductase (KR) domain stretch occupies residues 2236-2416 (ASYLLVGGVG…AVSLDMGVIK (181 aa)). Residues 2499-2509 (SRAQAQQAGGD) show a composition bias toward low complexity. Residues 2499-2520 (SRAQAQQAGGDSDSEPLSAKLR) are disordered. The Carrier domain maps to 2527–2604 (AAARCVGDAI…ALALDVVAKS (78 aa)). O-(pantetheine 4'-phosphoryl)serine is present on S2564.

Its pathway is secondary metabolite biosynthesis. Its function is as follows. Highly reducing polyketide synthase; part of the cluster B that mediates the biosynthesis of azasperpyranones, members of the azaphilone family that exhibit anti-cancer activities. Azasperpyranones are synthesized by 2 clusters, A and B. Cluster A is responsible for the production of the polyhydric phenol moiety while the azaphilonoid scaffold is produced by the cluster B. The non-reducing polyketide synthase ATEG_03629 produces 5-methyl orsellinic acid, which is then reduced to 5-methyl orsellinic aldehyde by the NRPS-like protein ATEG_03630. 5-methyl orsellinic aldehyde is then first hydroxylated by the FAD-dependent monooxygenase ATEG_03635 and subsequently hydroxylated by the cytochrome P450 monooxygenase ATEG_03631 to produce the unstable polyhydric phenol precursor of azasperpyranones. On the other hand, the polyketide synthase ATEG_07659 is responsible for producing the 3,5-dimethyloctadienone moiety from acetyl-CoA, three malonyl-CoA, and two S-adenosyl methionines (SAM). The 3,5-dimethyloctadienone moiety is then loaded onto the SAT domain of ATEG_07661 and extended with four malonyl-CoA and one SAM, which leads to the formation of 2,4-dihydroxy-6-(5,7-dimethyl-2-oxo-trans-3-trans-5-nonadienyl)-3-methylbenzaldehyde (compound 8) after reductive release and aldol condensation. The FAD-dependent monooxygenase ATEG_07662 is the next enzyme in the biosynthesis sequence and hydroxylates the side chain at the benzylic position of compound 8. In Aspergillus nidulans, afoF, the ortholog of the FAD-dependent oxygenase ATEG_07660, is the key enzyme for the biosynthesis of asperfuranone by catalyzing the hydroxylation at C-8 of to prevent the formation of a six-membered ring hemiacetal intermediate and thus facilitating the formation of a five-membered ring to produce asperfuranone. In Aspergillus terreus, ATEG_07660 is probably not functional, which leads to the formation of the six-membered ring hemiacetal intermediate presperpyranone instead of asperfuranone. Finally, ATEG_03636 is involved in the condensation of the polyhydric phenol moiety produced by cluster A and the perasperpyranone precursor produced by cluster B, to yield azasperpyranone A. Further modifications of azasperpyranone A result in the production of derivatives, including azasperpyranone B to F. The chain is Highly reducing polyketide synthase ATEG_07659 from Aspergillus terreus (strain NIH 2624 / FGSC A1156).